The sequence spans 357 residues: Homoserine kinase (357 aa).

Belongs to the GHMP kinase family. Homoserine kinase subfamily. In terms of assembly, homodimer.

It carries out the reaction L-homoserine + ATP = O-phospho-L-homoserine + ADP + H(+). It participates in amino-acid biosynthesis; L-threonine biosynthesis; L-threonine from L-aspartate: step 4/5. Its function is as follows. Commits homoserine to the threonine biosynthesis pathway by catalyzing its O-phosphorylation. The sequence is that of Homoserine kinase (THR1) from Candida albicans (strain SC5314 / ATCC MYA-2876) (Yeast).